Consider the following 555-residue polypeptide: Potassium-transporting ATPase potassium-binding subunit (555 aa).

Transmembrane regions (helical) follow at residues 2–22 (IWVAVVITMLLFILVAKPTGI), 60–80 (QYALSLVLLNGFMIVVVYFIF), 130–150 (IGITFLMFAAPATTLALVMAF), 173–193 (VFLPIAFVTALVFVALGVPQT), 246–266 (MSNILQMMLMMLLPTALPFTY), 278–298 (ILFVSLFMVFLLGFITITTSE), 374–394 (AGFVNIIMYAIIAVFISGLMV), 412–432 (LIAVTILFHPLLILGFSALAL), 483–503 (LVMFLGRYFSLVTMLAVAASL), and 525–545 (GIFIGTIVIVGALTFFPMLVL).

It belongs to the KdpA family. In terms of assembly, the system is composed of three essential subunits: KdpA, KdpB and KdpC.

The protein localises to the cell membrane. Its function is as follows. Part of the high-affinity ATP-driven potassium transport (or Kdp) system, which catalyzes the hydrolysis of ATP coupled with the electrogenic transport of potassium into the cytoplasm. This subunit binds the extracellular potassium ions and delivers the ions to the membrane domain of KdpB through an intramembrane tunnel. The chain is Potassium-transporting ATPase potassium-binding subunit from Bacillus cereus (strain AH820).